Reading from the N-terminus, the 465-residue chain is Methionine aminopeptidase 2-2 (465 aa).

Positions 1 to 11 (MGSKTPHNHRR) are enriched in basic residues. Residues 1 to 89 (MGSKTPHNHR…KKKKNTKELE (89 aa)) are disordered. Acidic residues predominate over residues 43 to 54 (GESEGGEDEDDD). Basic residues predominate over residues 73 to 84 (RNKRKKKKKKKN). His-217 contacts substrate. Residues Asp-238, Asp-249, and His-318 each coordinate a divalent metal cation. Position 326 (His-326) interacts with substrate. Residues Glu-351 and Glu-446 each coordinate a divalent metal cation.

Belongs to the peptidase M24A family. Methionine aminopeptidase eukaryotic type 2 subfamily. Requires Co(2+) as cofactor. It depends on Zn(2+) as a cofactor. Mn(2+) is required as a cofactor. Fe(2+) serves as cofactor.

Its subcellular location is the cytoplasm. The catalysed reaction is Release of N-terminal amino acids, preferentially methionine, from peptides and arylamides.. In terms of biological role, cotranslationally removes the N-terminal methionine from nascent proteins. The N-terminal methionine is often cleaved when the second residue in the primary sequence is small and uncharged (Met-Ala-, Cys, Gly, Pro, Ser, Thr, or Val). The polypeptide is Methionine aminopeptidase 2-2 (Ajellomyces capsulatus (strain G186AR / H82 / ATCC MYA-2454 / RMSCC 2432) (Darling's disease fungus)).